We begin with the raw amino-acid sequence, 319 residues long: HTH-type transcriptional regulator YidZ (319 aa).

One can recognise an HTH lysR-type domain in the interval 8-65 (LDLNLLLCLQLLMQERSVTKAAKRMNVTPSAVSKSLAKLRAWFDDPLFVNTPLGLAPT). The H-T-H motif DNA-binding region spans 25-44 (VTKAAKRMNVTPSAVSKSLA).

The protein belongs to the LysR transcriptional regulatory family.

Functionally, involved in anaerobic NO protection. In Salmonella heidelberg (strain SL476), this protein is HTH-type transcriptional regulator YidZ.